The chain runs to 255 residues: Zinc import ATP-binding protein ZnuC (255 aa).

Residues 5-220 form the ABC transporter domain; the sequence is VALEHIAVAF…PDFIAMFGYR (216 aa).

Belongs to the ABC transporter superfamily. Zinc importer (TC 3.A.1.15.5) family. As to quaternary structure, the complex is composed of two ATP-binding proteins (ZnuC), two transmembrane proteins (ZnuB) and a solute-binding protein (ZnuA).

It is found in the cell inner membrane. It catalyses the reaction Zn(2+)(out) + ATP(in) + H2O(in) = Zn(2+)(in) + ADP(in) + phosphate(in) + H(+)(in). In terms of biological role, part of the ABC transporter complex ZnuABC involved in zinc import. Responsible for energy coupling to the transport system. The protein is Zinc import ATP-binding protein ZnuC of Sodalis glossinidius (strain morsitans).